Consider the following 917-residue polypeptide: MENILCFLNSYTETGLSPDSHCLDIDLNFICLSGLGLFILYLFYMVLTLYSSPTEKNNDTQKHQGRARRKRKSVTFKDRKSLQKEAEEERKLHSFLKSFGPPVSCSPLGQHHDTTLFRRLLCPDPVCRVCNRATADIQRLLSWESLKDAAPSVSPLASSASGAESSFTLASTPSATTPEDLILSSRPKPSPPPPLILSPDLITTLADLFSPSPLRDPLPPQPVSPLDSKFPIDHSPPQQLPFPLLPPHHIERVEPSLQPEASLSLNTIFSFGSTLCQDISQAVNRTDSCARHHGPPTPSALPPEDCTVTQSKSNLTVLKTFPEMLSLGGSGGSSTSAPTTKGIDHSCPASSEFSWWQPHAKDSFSSNFVPSDFMEELLTLHSSEASLGGHSVANIIQPVNISFLSHDIPALLERQVKRRGDFLMWKENGKKPGSFPTQLRPNYQLNSSRNMLTSTAVKHDLAESFPFWASKGKLEWQHIHQQPPYSKCFEDHLEQKYVQLFWGLPSLHSESLHPTVFVQHGRSSMFVFFNGITNTSMSHESPVLPPPQPLFLPSTQPLPLPQTLPRGQSLHLTQVKSLAQPQSPFPALPPSPLFLIRVCGVCFHRPQNEARSLMPSEINHLEWNVLQKVQESVWGLPSVVQKSQEDFCPPAPNPVLVRKSFKVHVPISIIPGDFPLSSEVRKKLEQHIRKRLIQRRWGLPRRIHESLSLLRPQNKISELSVSESIHGPLNISLVEGQRCNVLKKSASSFPRSFHERSSNMLSMENVGNYQGCSQETAPKNHLLHDPETSSDEDLRSNSERDLGTHMMHLSGNDSGVRLGQKQLENALTVHLSKKFEEINEGRMPGTVHSSWHSVKQTICLPEKSHSQIKHRNLAALVSEDHGVDTSQEMSFLSSNKQKMLEAHIKSFHMKPILNLSI.

Residues 29–49 traverse the membrane as a helical segment; sequence FICLSGLGLFILYLFYMVLTL. Disordered stretches follow at residues 55-80, 152-195, and 773-798; these read EKNN…KDRK, SVSP…PPPL, and SQET…RSNS. Over residues 63 to 74 the composition is skewed to basic residues; sequence HQGRARRKRKSV. A compositionally biased stretch (low complexity) spans 152–163; that stretch reads SVSPLASSASGA. A compositionally biased stretch (polar residues) spans 164 to 177; it reads ESSFTLASTPSATT. Positions 782–798 are enriched in basic and acidic residues; sequence LLHDPETSSDEDLRSNS.

The protein belongs to the SPATA31 family.

Its subcellular location is the membrane. Its function is as follows. May play a role in spermatogenesis. This is Spermatogenesis-associated protein 31D4 (SPATA31D4) from Homo sapiens (Human).